Consider the following 208-residue polypeptide: Imidazoleglycerol-phosphate dehydratase (208 aa).

This sequence belongs to the imidazoleglycerol-phosphate dehydratase family.

It catalyses the reaction D-erythro-1-(imidazol-4-yl)glycerol 3-phosphate = 3-(imidazol-4-yl)-2-oxopropyl phosphate + H2O. It participates in amino-acid biosynthesis; L-histidine biosynthesis; L-histidine from 5-phospho-alpha-D-ribose 1-diphosphate: step 6/9. This chain is Imidazoleglycerol-phosphate dehydratase (his3), found in Trichoderma harzianum (Hypocrea lixii).